Consider the following 110-residue polypeptide: Putative UPF0377 protein YKL223W (110 aa).

It belongs to the UPF0377 family.

The protein is Putative UPF0377 protein YKL223W of Saccharomyces cerevisiae (strain ATCC 204508 / S288c) (Baker's yeast).